The primary structure comprises 118 residues: MSAPTSYDDEELEELLRRKAAQEQKRLEEERKRKAELESQKESILRVILTPEARQRLTNIKLVKPEFAESLENQLIALAQSGRIKVPITDEELKQILEQISEQNRRDFKIQIRERGWK.

It belongs to the PDCD5 family.

This is DNA-binding protein YG5714_1868 from Saccharolobus islandicus (strain Y.G.57.14 / Yellowstone #1) (Sulfolobus islandicus).